Here is a 156-residue protein sequence, read N- to C-terminus: Small ribosomal subunit protein uS7 (156 aa).

This sequence belongs to the universal ribosomal protein uS7 family. As to quaternary structure, part of the 30S ribosomal subunit. Contacts proteins S9 and S11.

In terms of biological role, one of the primary rRNA binding proteins, it binds directly to 16S rRNA where it nucleates assembly of the head domain of the 30S subunit. Is located at the subunit interface close to the decoding center, probably blocks exit of the E-site tRNA. This chain is Small ribosomal subunit protein uS7, found in Prochlorococcus marinus (strain NATL2A).